Reading from the N-terminus, the 367-residue chain is Peptide chain release factor 2 (367 aa).

Q251 carries the N5-methylglutamine modification.

This sequence belongs to the prokaryotic/mitochondrial release factor family. Post-translationally, methylated by PrmC. Methylation increases the termination efficiency of RF2.

Its subcellular location is the cytoplasm. In terms of biological role, peptide chain release factor 2 directs the termination of translation in response to the peptide chain termination codons UGA and UAA. The chain is Peptide chain release factor 2 from Nautilia profundicola (strain ATCC BAA-1463 / DSM 18972 / AmH).